A 163-amino-acid polypeptide reads, in one-letter code: MASNKVVFSVLLLVVLSVLAAAMATMADHHQVYSPGEQCRPGISYPTYSLPQCRTLVRRQCVGRGAASAADEQVWQDCCRQLAAVDDGWCRCGALDHMLSGIYRELGATEAGHPMAEVFPGCRRGDLERAAASLPAFCNVDIPNGPGGVCYWLGYPRTPRTGH.

An N-terminal signal peptide occupies residues 1–27; the sequence is MASNKVVFSVLLLVVLSVLAAAMATMA. Intrachain disulfides connect cysteine 39–cysteine 90, cysteine 53–cysteine 78, cysteine 61–cysteine 122, cysteine 79–cysteine 138, and cysteine 92–cysteine 150.

It belongs to the cereal trypsin/alpha-amylase inhibitor family. Five disulfide bonds are present.

The protein resides in the secreted. Its function is as follows. Seed storage protein. The chain is Seed allergenic protein RAG1 (RAG1) from Oryza sativa subsp. japonica (Rice).